The chain runs to 122 residues: Small ribosomal subunit protein uS13 (122 aa).

The tract at residues 92-122 (HRNGLPVRGQRTHTNARTRKGKAKPIAGKKK) is disordered. Over residues 101–122 (QRTHTNARTRKGKAKPIAGKKK) the composition is skewed to basic residues.

It belongs to the universal ribosomal protein uS13 family. In terms of assembly, part of the 30S ribosomal subunit. Forms a loose heterodimer with protein S19. Forms two bridges to the 50S subunit in the 70S ribosome.

Functionally, located at the top of the head of the 30S subunit, it contacts several helices of the 16S rRNA. In the 70S ribosome it contacts the 23S rRNA (bridge B1a) and protein L5 of the 50S subunit (bridge B1b), connecting the 2 subunits; these bridges are implicated in subunit movement. Contacts the tRNAs in the A and P-sites. The protein is Small ribosomal subunit protein uS13 of Erythrobacter litoralis (strain HTCC2594).